Consider the following 396-residue polypeptide: Pectinesterase (396 aa).

Positions 1–26 (MQSTTLYLKTAAFLGGCSLFAATALA) are cleaved as a signal peptide. Substrate is bound at residue T174. Catalysis depends on D232, which acts as the Proton donor. The active-site Nucleophile is the D259. Positions 324 and 326 each coordinate substrate.

Belongs to the pectinesterase family.

It is found in the secreted. The catalysed reaction is [(1-&gt;4)-alpha-D-galacturonosyl methyl ester](n) + n H2O = [(1-&gt;4)-alpha-D-galacturonosyl](n) + n methanol + n H(+). Its pathway is glycan metabolism; pectin degradation; 2-dehydro-3-deoxy-D-gluconate from pectin: step 1/5. Its function is as follows. Involved in maceration and soft-rotting of plant tissue. The chain is Pectinesterase (pme) from Ralstonia solanacearum (Pseudomonas solanacearum).